We begin with the raw amino-acid sequence, 368 residues long: F-box only protein 28 (368 aa).

The segment covering 1–11 has biased composition (basic and acidic residues); the sequence is MAAASEERMAE. Residues 1–57 are disordered; sequence MAAASEERMAEEGGGGHGDGGSPSAIASTQRLPPPPPPQPPQPGSQAPPAPALAPDQ. A compositionally biased stretch (gly residues) spans 12-21; sequence EGGGGHGDGG. The segment covering 32–52 has biased composition (pro residues); that stretch reads LPPPPPPQPPQPGSQAPPAPA. In terms of domain architecture, F-box spans 61–109; sequence NNTLVALPIVAIENILSFMSYDEISQLRLVCKRMDLVCQRMLNQGFLKV. A phosphoserine mark is found at Ser-235 and Ser-242. Phosphothreonine is present on Thr-270. The interval 328–368 is disordered; that stretch reads MESAVGNSSGSGQSEESPRKRKKAAEAIDSLRKSKRLRNRK. Residue Ser-344 is modified to Phosphoserine.

As to quaternary structure, part of a SCF (SKP1-cullin-F-box) protein ligase complex.

The protein localises to the chromosome. It localises to the centromere. The protein resides in the kinetochore. Functionally, probably recognizes and binds to some phosphorylated proteins and promotes their ubiquitination and degradation. This is F-box only protein 28 (FBXO28) from Bos taurus (Bovine).